A 160-amino-acid polypeptide reads, in one-letter code: Large ribosomal subunit protein uL11 (160 aa).

This sequence belongs to the universal ribosomal protein uL11 family. In terms of assembly, part of the ribosomal stalk of the 50S ribosomal subunit. Interacts with L10 and the large rRNA to form the base of the stalk. L10 forms an elongated spine to which L12 dimers bind in a sequential fashion forming a multimeric L10(L12)X complex.

In terms of biological role, forms part of the ribosomal stalk which helps the ribosome interact with GTP-bound translation factors. This Nanoarchaeum equitans (strain Kin4-M) protein is Large ribosomal subunit protein uL11.